The sequence spans 699 residues: Glycine--tRNA ligase beta subunit (699 aa).

This sequence belongs to the class-II aminoacyl-tRNA synthetase family. In terms of assembly, tetramer of two alpha and two beta subunits.

It localises to the cytoplasm. The enzyme catalyses tRNA(Gly) + glycine + ATP = glycyl-tRNA(Gly) + AMP + diphosphate. The protein is Glycine--tRNA ligase beta subunit of Baumannia cicadellinicola subsp. Homalodisca coagulata.